The following is an 89-amino-acid chain: Small ribosomal subunit protein uS15 (89 aa).

It belongs to the universal ribosomal protein uS15 family. As to quaternary structure, part of the 30S ribosomal subunit. Forms a bridge to the 50S subunit in the 70S ribosome, contacting the 23S rRNA.

In terms of biological role, one of the primary rRNA binding proteins, it binds directly to 16S rRNA where it helps nucleate assembly of the platform of the 30S subunit by binding and bridging several RNA helices of the 16S rRNA. Forms an intersubunit bridge (bridge B4) with the 23S rRNA of the 50S subunit in the ribosome. The sequence is that of Small ribosomal subunit protein uS15 from Bifidobacterium adolescentis (strain ATCC 15703 / DSM 20083 / NCTC 11814 / E194a).